The chain runs to 77 residues: MEDLNEANFSHLLINLSNNKDIDAQYASTLSVVHELLSAINFKIFNINKKSKKNSKSIEQHPVVHHAASAGREFNRR.

The interval 53–77 is disordered; the sequence is KNSKSIEQHPVVHHAASAGREFNRR.

The protein belongs to the orthopoxvirus OPG157 family. Interacts with protein OPG092; the interaction stabilizes both proteins. Interacts with protein OPG062. Post-translationally, phosphorylated by viral OPG054 kinase.

Required for the association between the dense viroplasm and the viral membranes to form the mature virion (MV). In Homo sapiens (Human), this protein is Protein OPG157 (OPG157).